A 630-amino-acid polypeptide reads, in one-letter code: MQSTSSTSSGSCSRPLEGSTLNSGGSAENVARDGGSGDDSVGIGDENPSGSSAATNGHDSKHNGFIVNNNGSSSRIVDGENNRENTSCSGVQLDKSNQEIIRLIGQYLHDVGLDKSVQTLMLESGCYLEHPSATKFREHVLMGDWSKADSDLKDLEPLIDNGKLATITEMKFILLEQKYLEHLDDGNPLDALHVLRSELTPLQHNITRVHQLSSYMMCSTNQDLYQRAKWEGKGILSRALVMERLQTFMPPSVMMSPRRLRTLLQQAVELQSQHCPCHDMAWETNLETVSLLTDHCCTTDGFPMQTIQILTDHCDEVWFCKFSPDGLKLATGSKDSTVIIWDVDPYKLTLKHRRVLDGQAQLSVSFVSWSPDSKLILVGGTEDSHELYIWNVDDGKLVVKFSQSLEDSLACGAFSRDGARFVCGGQKGQLYLCDLNGTIVDSWEGVRVNSIAFRADNKTILAADNHYRIRGYNFDSPRSDFDILREPHPIMTFSINSADRLALLNVSNQGLHLWDIEDKCLVRRFQGIRQSNFAIHSCFGGVNESFVASGSEDKVVYIWHIKREEPLAKLAGHTKTVNCVSWNPVYPSLLASASDDATVRIWGPKPNGSSATTESDDCSSSSSSSSWNMT.

Over residues 1-13 the composition is skewed to low complexity; the sequence is MQSTSSTSSGSCS. The disordered stretch occupies residues 1–90; it reads MQSTSSTSSG…NNRENTSCSG (90 aa). Phosphoserine is present on residues serine 36 and serine 40. 2 stretches are compositionally biased toward polar residues: residues 48-57 and 66-75; these read PSGSSAATNG and IVNNNGSSSR. The LisH domain maps to 96–128; it reads SNQEIIRLIGQYLHDVGLDKSVQTLMLESGCYL. Residues 129–190 form the CTLH domain; sequence EHPSATKFRE…EHLDDGNPLD (62 aa). WD repeat units follow at residues 312 to 351, 359 to 400, 404 to 443, 445 to 482, 485 to 524, 529 to 569, and 572 to 612; these read DHCD…LTLK, QAQL…LVVK, SLED…VDSW, GVRV…SDFD, REPH…LVRR, RQSN…PLAK, and GHTK…SSAT. The tract at residues 604–630 is disordered; that stretch reads PKPNGSSATTESDDCSSSSSSSSWNMT. Residues 609 to 630 show a composition bias toward low complexity; that stretch reads SSATTESDDCSSSSSSSSWNMT.

The protein resides in the cytoplasm. It is found in the mitochondrion. In terms of biological role, G-beta-like protein involved in cell signal transduction. The protein is WD repeat-containing protein 26 homolog of Drosophila melanogaster (Fruit fly).